Reading from the N-terminus, the 123-residue chain is uncharacterized protein (123 aa).

The tract at residues 76–97 is disordered; the sequence is ENNKRKKKSEGERVRSPRTFRG.

This is an uncharacterized protein from Saccharomyces cerevisiae (strain ATCC 204508 / S288c) (Baker's yeast).